The primary structure comprises 180 residues: Acireductone dioxygenase (180 aa).

Positions 97, 99, 103, and 141 each coordinate Fe(2+). 4 residues coordinate Ni(2+): histidine 97, histidine 99, glutamate 103, and histidine 141.

The protein belongs to the acireductone dioxygenase (ARD) family. Monomer. Fe(2+) serves as cofactor. It depends on Ni(2+) as a cofactor.

It catalyses the reaction 1,2-dihydroxy-5-(methylsulfanyl)pent-1-en-3-one + O2 = 3-(methylsulfanyl)propanoate + CO + formate + 2 H(+). The enzyme catalyses 1,2-dihydroxy-5-(methylsulfanyl)pent-1-en-3-one + O2 = 4-methylsulfanyl-2-oxobutanoate + formate + 2 H(+). Its pathway is amino-acid biosynthesis; L-methionine biosynthesis via salvage pathway; L-methionine from S-methyl-5-thio-alpha-D-ribose 1-phosphate: step 5/6. In terms of biological role, catalyzes 2 different reactions between oxygen and the acireductone 1,2-dihydroxy-3-keto-5-methylthiopentene (DHK-MTPene) depending upon the metal bound in the active site. Fe-containing acireductone dioxygenase (Fe-ARD) produces formate and 2-keto-4-methylthiobutyrate (KMTB), the alpha-ketoacid precursor of methionine in the methionine recycle pathway. Ni-containing acireductone dioxygenase (Ni-ARD) produces methylthiopropionate, carbon monoxide and formate, and does not lie on the methionine recycle pathway. The sequence is that of Acireductone dioxygenase from Cronobacter sakazakii (strain ATCC BAA-894) (Enterobacter sakazakii).